Consider the following 356-residue polypeptide: MSLLSDLINLDLSETTEKIIAEYIWIGGSGLDLRSKARTLPGPVTDPSQLPKWNYDGSSTGQAPGEDSEVIIYPQAIFKDPFRRGNNILVMCDAYTPAGEPIPTNKRHAAAKIFSHPDVVAEVPWYGIEQEYTLLQKDINWPLGWPVGGFPGPQGPYYCGAGADKAFGRDIVDSHYKACLYAGINISGINGEVMPGQWEFQVGPSVGISAGDEIWVARYILERITEVAGVVLSFDPKPIKGDWNGAGAHTNYSTKSMREDGGYEVILKAIEKLGKKHKEHIAAYGEGNERRLTGRHETADINTFLWGVANRGASIRVGRDTEKAGKGYFEDRRPSSNMDPYVVTSMIADTTILWKP.

Residues 19-99 (IIAEYIWIGG…VMCDAYTPAG (81 aa)) form the GS beta-grasp domain. The disordered stretch occupies residues 38–66 (RTLPGPVTDPSQLPKWNYDGSSTGQAPGE). The GS catalytic domain maps to 106–356 (KRHAAAKIFS…IADTTILWKP (251 aa)).

It belongs to the glutamine synthetase family. In terms of assembly, homooctamer.

The protein localises to the cytoplasm. It catalyses the reaction L-glutamate + NH4(+) + ATP = L-glutamine + ADP + phosphate + H(+). The polypeptide is Glutamine synthetase cytosolic isozyme (Medicago sativa (Alfalfa)).